A 98-amino-acid chain; its full sequence is ESAT-6-like protein EsxM (98 aa).

This sequence belongs to the WXG100 family. CFP-10 subfamily.

It localises to the secreted. Alters the host macrophage cytoskeleton and enhances macrophage motility. Promotes granuloma efflux, extrapulmonary dissemination of infection and bone disease. The sequence is that of ESAT-6-like protein EsxM from Mycobacterium marinum (strain ATCC BAA-535 / M).